The primary structure comprises 156 residues: ADP-ribose 1''-phosphate phosphatase (156 aa).

One can recognise a Macro domain in the interval 1–156 (MIQYIKGDLF…DNLHFNVYVI (156 aa)). Residues 7-9 (GDL), 25-27 (ACN), 32-37 (WGGGIA), and 127-133 (INAGIFG) contribute to the substrate site.

It belongs to the POA1 family.

It carries out the reaction ADP-alpha-D-ribose 1''-phosphate + H2O = ADP-D-ribose + phosphate. In terms of biological role, highly specific phosphatase involved in the metabolism of ADP-ribose 1''-phosphate (Appr1p) which is produced as a consequence of tRNA splicing. This Candida albicans (strain SC5314 / ATCC MYA-2876) (Yeast) protein is ADP-ribose 1''-phosphate phosphatase (POA1).